Reading from the N-terminus, the 684-residue chain is Probable potassium transport system protein Kup (684 aa).

A run of 12 helical transmembrane segments spans residues A19–M39, V61–L81, W104–P124, Q151–T171, A177–L197, M223–S243, L255–L275, L303–G323, L352–F372, A381–L401, P407–I427, and F433–V453.

Belongs to the HAK/KUP transporter (TC 2.A.72) family.

It localises to the cell membrane. It carries out the reaction K(+)(in) + H(+)(in) = K(+)(out) + H(+)(out). In terms of biological role, transport of potassium into the cell. Likely operates as a K(+):H(+) symporter. The chain is Probable potassium transport system protein Kup from Lacticaseibacillus paracasei (strain ATCC 334 / BCRC 17002 / CCUG 31169 / CIP 107868 / KCTC 3260 / NRRL B-441) (Lactobacillus paracasei).